The primary structure comprises 448 residues: 5-hydroxytryptamine receptor 7 (448 aa).

At 1 to 86 the chain is on the extracellular side; sequence MMDVNSSGRP…INYGRVEKVV (86 aa). Residues N5 and N69 are each glycosylated (N-linked (GlcNAc...) asparagine). The chain crosses the membrane as a helical span at residues 87 to 111; that stretch reads IGSILTLITLLTIAGNCLVVISVCF. The Cytoplasmic portion of the chain corresponds to 112–121; that stretch reads VKKLRQPSNY. The helical transmembrane segment at 122–143 threads the bilayer; sequence LIVSLALADLSVAVAVMPFVSV. Residues 144 to 155 are Extracellular-facing; that stretch reads TDLIGGKWIFGH. A helical transmembrane segment spans residues 156-181; the sequence is FFCNVFIAMDVMCCTASIMTLCVISI. A disulfide bridge connects residues C158 and C234. D165 serves as a coordination point for serotonin. The Cytoplasmic segment spans residues 182–201; sequence DRYLGITRPLTYPVRQNGKC. Residues 202–222 traverse the membrane as a helical segment; the sequence is MAKMILSVWLLSASITLPPLF. Topologically, residues 223–240 are extracellular; it reads GWAQNVNDDKVCLISQDF. Residues 241–263 traverse the membrane as a helical segment; the sequence is GYTIYSTAVAFYIPMSVMLFMYY. At 264–329 the chain is on the cytoplasmic side; the sequence is QIYKAARKSA…SIFKREQKAA (66 aa). A helical membrane pass occupies residues 330 to 355; it reads TTLGIIVGAFTVCWLPFFLLSTARPF. Residues 356 to 366 lie on the Extracellular side of the membrane; it reads ICGTSCSCIPL. A helical transmembrane segment spans residues 367–390; sequence WVERTCLWLGYANSLINPFIYAFF. The Cytoplasmic segment spans residues 391–448; that stretch reads NRDLRTTYRSLLQCQYRNINRKLSAAGMHEALKLAERPERSEFVLQNCDHCGKKGHDT. A lipid anchor (S-palmitoyl cysteine) is attached at C404.

Belongs to the G-protein coupled receptor 1 family.

The protein resides in the cell membrane. G-protein coupled receptor for 5-hydroxytryptamine (serotonin), a biogenic hormone that functions as a neurotransmitter, a hormone and a mitogen. Ligand binding causes a conformation change that triggers signaling via guanine nucleotide-binding proteins (G proteins) and modulates the activity of downstream effectors. HTR7 is coupled to G(s) G alpha proteins and mediates activation of adenylate cyclase activity. The polypeptide is 5-hydroxytryptamine receptor 7 (Htr7) (Mus musculus (Mouse)).